The following is a 367-amino-acid chain: Probable dual-specificity RNA methyltransferase RlmN (367 aa).

Residue Glu-92 is the Proton acceptor of the active site. The region spanning 98–326 is the Radical SAM core domain; sequence QEYGLSVCVT…YDTLKKNGIN (229 aa). Cys-105 and Cys-341 are oxidised to a cystine. Cys-112, Cys-116, and Cys-119 together coordinate [4Fe-4S] cluster. Residues 164–165, Ser-196, 219–221, and Asn-297 contribute to the S-adenosyl-L-methionine site; these read GE and SLH. Cys-341 acts as the S-methylcysteine intermediate in catalysis.

It belongs to the radical SAM superfamily. RlmN family. [4Fe-4S] cluster is required as a cofactor.

The protein localises to the cytoplasm. The catalysed reaction is adenosine(2503) in 23S rRNA + 2 reduced [2Fe-2S]-[ferredoxin] + 2 S-adenosyl-L-methionine = 2-methyladenosine(2503) in 23S rRNA + 5'-deoxyadenosine + L-methionine + 2 oxidized [2Fe-2S]-[ferredoxin] + S-adenosyl-L-homocysteine. It carries out the reaction adenosine(37) in tRNA + 2 reduced [2Fe-2S]-[ferredoxin] + 2 S-adenosyl-L-methionine = 2-methyladenosine(37) in tRNA + 5'-deoxyadenosine + L-methionine + 2 oxidized [2Fe-2S]-[ferredoxin] + S-adenosyl-L-homocysteine. Specifically methylates position 2 of adenine 2503 in 23S rRNA and position 2 of adenine 37 in tRNAs. The chain is Probable dual-specificity RNA methyltransferase RlmN from Listeria welshimeri serovar 6b (strain ATCC 35897 / DSM 20650 / CCUG 15529 / CIP 8149 / NCTC 11857 / SLCC 5334 / V8).